Consider the following 1704-residue polypeptide: ABC transporter ced-7 (1704 aa).

The chain crosses the membrane as a helical span at residues 23 to 43 (VWTLFELIIPCLLLGPLVYLV). Asn126 and Asn145 each carry an N-linked (GlcNAc...) asparagine glycan. 3 consecutive transmembrane segments (helical) span residues 256-276 (AFID…VIHI), 306-326 (VVMA…PLTF), and 334-354 (AALI…GAFV). Asn359 carries N-linked (GlcNAc...) asparagine glycosylation. The next 2 helical transmembrane spans lie at 362-382 (NSAI…SYKL) and 389-409 (ISSC…AVEA). N-linked (GlcNAc...) asparagine glycosylation is found at Asn421 and Asn427. A helical transmembrane segment spans residues 436–456 (GWALVMMIVDILWMSIGALVV). N-linked (GlcNAc...) asparagine glycosylation occurs at Asn481. Residues 511–536 (NPMASTSLNPPNADSDSLLEGSTEAD) are disordered. Over residues 512-525 (PMASTSLNPPNADS) the composition is skewed to polar residues. In terms of domain architecture, ABC transporter 1 spans 546–777 (IIVRNLVKIW…FGTGYLLTVV (232 aa)). 580–587 (GHNGAGKS) serves as a coordination point for ATP. 3 N-linked (GlcNAc...) asparagine glycosylation sites follow: Asn678, Asn727, and Asn899. 2 stretches are compositionally biased toward polar residues: residues 888 to 902 (RQNS…NASE) and 911 to 921 (DTQSSTKSADS). The segment at 888 to 933 (RQNSRISHNSRNASEPSLKPAGYDTQSSTKSADSYQKLMDSQARGP) is disordered. A helical transmembrane segment spans residues 963–983 (LFTQVLIPIILLGLVGSLTTL). N-linked (GlcNAc...) asparagine glycosylation is found at Asn986, Asn1012, and Asn1045. 7 consecutive transmembrane segments (helical) span residues 1126–1146 (LAPM…MFLI), 1153–1173 (FAHQ…ASLI), 1176–1196 (GILY…FHWM), 1201–1221 (AIVI…IYAV), 1234–1254 (LLII…FLIF), 1266–1286 (ILVN…AIIT), and 1311–1331 (LMGT…FKFV). Residues 1379 to 1603 (LVIKDLTKTF…YGNNYTMTLS (225 aa)) form the ABC transporter 2 domain. Residue 1411 to 1418 (GVNGAGKT) participates in ATP binding. 2 N-linked (GlcNAc...) asparagine glycosylation sites follow: Asn1597 and Asn1632.

This sequence belongs to the ABC transporter superfamily. ABCA family. As to expression, ubiquitous in embryos. Expressed in larval germline precursors. Expression in larvae and adults is seen in amphid sheath cells, pharyngeal-intestinal valve and phasmid sheath cells. Low levels of expression are also seen in gonadal sheath cells.

The protein localises to the membrane. In terms of biological role, functions in the engulfment of cell corpses during embryonic programmed cell death to translocate molecules that mediate homotypic adhesion between cell surfaces of the dying and engulfing cells. This chain is ABC transporter ced-7 (ced-7), found in Caenorhabditis elegans.